A 129-amino-acid chain; its full sequence is Small ribosomal subunit protein uS9 (129 aa).

This sequence belongs to the universal ribosomal protein uS9 family.

The chain is Small ribosomal subunit protein uS9 from Wolinella succinogenes (strain ATCC 29543 / DSM 1740 / CCUG 13145 / JCM 31913 / LMG 7466 / NCTC 11488 / FDC 602W) (Vibrio succinogenes).